Consider the following 275-residue polypeptide: Large ribosomal subunit protein uL2c (275 aa).

Positions P225 to G249 are disordered.

The protein belongs to the universal ribosomal protein uL2 family. Part of the 50S ribosomal subunit.

It localises to the plastid. This chain is Large ribosomal subunit protein uL2c (rpl2), found in Cuscuta reflexa (Southern Asian dodder).